The chain runs to 64 residues: Endodeoxyribonuclease toxin RalR (64 aa).

Ca(2+) serves as cofactor. Requires Mg(2+) as cofactor.

Inhibited by EDTA. Its function is as follows. Toxic component of a type I toxin-antitoxin (TA) system. Upon overexpression inhibits growth and reduces colony-forming units in both the presence and absence of the Rac prophage, cells become filamentous. Has deoxyribonuclease activity (probably endonucleolytic), does not digest RNA. Its toxic effects are neutralized by sRNA antitoxin RalA, which is encoded in trans on the opposite DNA strand. Has RAL-like activity. The protein is Endodeoxyribonuclease toxin RalR (ralR) of Escherichia coli (strain K12).